We begin with the raw amino-acid sequence, 407 residues long: Biflaviolin synthase CYP158A1 (407 aa).

Residues 1–11 (MTQETTTLTGQ) show a composition bias toward polar residues. A disordered region spans residues 1 to 20 (MTQETTTLTGQSPPPVRDWP). Residues Arg-92, Tyr-199, and 290–291 (HR) contribute to the flaviolin site. Cys-356 serves as a coordination point for heme.

The protein belongs to the cytochrome P450 family. Requires heme as cofactor.

The catalysed reaction is 2 flaviolin + 2 reduced [2Fe-2S]-[ferredoxin] + O2 + H(+) = 3,3'-biflaviolin + 2 oxidized [2Fe-2S]-[ferredoxin] + 2 H2O. It catalyses the reaction 2 flaviolin + 2 reduced [2Fe-2S]-[ferredoxin] + O2 + H(+) = 3,8'-biflaviolin + 2 oxidized [2Fe-2S]-[ferredoxin] + 2 H2O. It participates in pigment biosynthesis. In terms of biological role, catalyzes oxidative C-C coupling reaction to polymerize flaviolin and form highly conjugated pigments which protect the soil bacterium from deleterious effects of UV irradiation (two isomers of biflaviolin and one triflaviolin). The protein is Biflaviolin synthase CYP158A1 of Streptomyces coelicolor (strain ATCC BAA-471 / A3(2) / M145).